The primary structure comprises 268 residues: 4-diphosphocytidyl-2-C-methyl-D-erythritol kinase (268 aa).

Lys10 is an active-site residue. Pro101–Thr111 serves as a coordination point for ATP. Asp143 is an active-site residue.

It belongs to the GHMP kinase family. IspE subfamily.

It carries out the reaction 4-CDP-2-C-methyl-D-erythritol + ATP = 4-CDP-2-C-methyl-D-erythritol 2-phosphate + ADP + H(+). It functions in the pathway isoprenoid biosynthesis; isopentenyl diphosphate biosynthesis via DXP pathway; isopentenyl diphosphate from 1-deoxy-D-xylulose 5-phosphate: step 3/6. In terms of biological role, catalyzes the phosphorylation of the position 2 hydroxy group of 4-diphosphocytidyl-2C-methyl-D-erythritol. This chain is 4-diphosphocytidyl-2-C-methyl-D-erythritol kinase, found in Helicobacter pylori (strain ATCC 700392 / 26695) (Campylobacter pylori).